A 236-amino-acid chain; its full sequence is DNA repair protein RecO (236 aa).

The protein belongs to the RecO family.

Functionally, involved in DNA repair and RecF pathway recombination. This is DNA repair protein RecO from Cellvibrio japonicus (strain Ueda107) (Pseudomonas fluorescens subsp. cellulosa).